Consider the following 597-residue polypeptide: Pentatricopeptide repeat-containing protein At2g21090 (597 aa).

13 PPR repeats span residues 45-79 (PFDLLASLLQQCGDTKSLKQGKWIHRHLKITGFKR), 81-111 (NTLLSNHLIGMYMKCGKPIDACKVFDQMHLR), 112-142 (NLYSWNNMVSGYVKSGMLVRARVVFDSMPER), 143-177 (DVVSWNTMVIGYAQDGNLHEALWFYKEFRRSGIKF), 178-212 (NEFSFAGLLTACVKSRQLQLNRQAHGQVLVAGFLS), 213-243 (NVVLSCSIIDAYAKCGQMESAKRCFDEMTVK), 244-274 (DIHIWTTLISGYAKLGDMEAAEKLFCEMPEK), 275-309 (NPVSWTALIAGYVRQGSGNRALDLFRKMIALGVKP), 310-344 (EQFTFSSCLCASASIASLRHGKEIHGYMIRTNVRP), 345-375 (NAIVISSLIDMYSKSGSLEASERVFRICDDK), 377-411 (DCVFWNTMISALAQHGLGHKALRMLDDMIKFRVQP), 412-447 (NRTTLVVILNACSHSGLVEEGLRWFESMTVQHGIVP), and 448-478 (DQEHYACLIDLLGRAGCFKELMRKIEEMPFE). Positions 483–558 (IWNAILGVCR…EKAVSWIEIE (76 aa)) are type E motif. A type E(+) motif region spans residues 559 to 591 (KKVEAFTVSDGSHAHARKEEIYFILHNLAAVIE).

The protein belongs to the PPR family. PCMP-E subfamily.

This chain is Pentatricopeptide repeat-containing protein At2g21090 (PCMP-E48), found in Arabidopsis thaliana (Mouse-ear cress).